A 359-amino-acid polypeptide reads, in one-letter code: Peptide chain release factor 1 (359 aa).

N5-methylglutamine is present on glutamine 235. The segment at 283–309 (QKAESERSQARRSQVGSGDRSERIRTY) is disordered.

This sequence belongs to the prokaryotic/mitochondrial release factor family. Methylated by PrmC. Methylation increases the termination efficiency of RF1.

The protein localises to the cytoplasm. Peptide chain release factor 1 directs the termination of translation in response to the peptide chain termination codons UAG and UAA. This chain is Peptide chain release factor 1, found in Brucella melitensis biotype 2 (strain ATCC 23457).